Here is a 707-residue protein sequence, read N- to C-terminus: Lipase maturation factor 2 (707 aa).

Transmembrane regions (helical) follow at residues 10–30, 78–98, 102–122, 123–143, 165–185, 227–247, 259–279, 310–330, 364–384, and 399–419; these read LFLQ…YTQI, LELL…LSPL, VIYL…QVFL, YFQW…VAPL, DLPF…SGVV, LSVV…FAPI, VLLQ…LMTL, ALLA…LAYG, LTLP…LSAL, and AVVQ…ISLV. N489 and N616 each carry an N-linked (GlcNAc...) asparagine glycan. Residues 637 to 657 traverse the membrane as a helical segment; sequence ALLWGLLMAVGAVRFVQALLA. The tract at residues 665-707 is disordered; the sequence is PLAPVSGEKRRPASQKDSGAASEQATAAPNPCSSSSRTTRRKK. Polar residues predominate over residues 679 to 691; the sequence is QKDSGAASEQATA.

The protein belongs to the lipase maturation factor family.

The protein localises to the endoplasmic reticulum membrane. Its function is as follows. Involved in the maturation of specific proteins in the endoplasmic reticulum. May be required for maturation and transport of active lipoprotein lipase (LPL) through the secretory pathway. This chain is Lipase maturation factor 2 (LMF2), found in Homo sapiens (Human).